Here is a 314-residue protein sequence, read N- to C-terminus: Acetaldehyde dehydrogenase 2 (314 aa).

15-18 (SGNI) contacts NAD(+). The Acyl-thioester intermediate role is filled by cysteine 133. Residues 164-172 (SAGPGTRAN) and asparagine 291 each bind NAD(+).

The protein belongs to the acetaldehyde dehydrogenase family.

It carries out the reaction acetaldehyde + NAD(+) + CoA = acetyl-CoA + NADH + H(+). In Pseudomonas putida (strain ATCC 700007 / DSM 6899 / JCM 31910 / BCRC 17059 / LMG 24140 / F1), this protein is Acetaldehyde dehydrogenase 2.